A 167-amino-acid chain; its full sequence is uncharacterized protein (167 aa).

The span at 1-13 (MQGDIRRKKDLLP) shows a compositional bias: basic and acidic residues. 2 disordered regions span residues 1 to 26 (MQGDIRRKKDLLPRYKTGSKYNSRRR) and 67 to 167 (ESHS…ILDN). Residues 71 to 80 (SDVSASASDH) are compositionally biased toward low complexity. The span at 102 to 156 (VPKEKFNNEVAKQQEVKNLENDLKPQIDSEKQKQINKDKKEQKQQLQKEKQDLAK) shows a compositional bias: basic and acidic residues.

This is an uncharacterized protein from Saccharomyces cerevisiae (strain ATCC 204508 / S288c) (Baker's yeast).